The sequence spans 87 residues: Small ribosomal subunit protein uS17 (87 aa).

Belongs to the universal ribosomal protein uS17 family. In terms of assembly, part of the 30S ribosomal subunit.

In terms of biological role, one of the primary rRNA binding proteins, it binds specifically to the 5'-end of 16S ribosomal RNA. The sequence is that of Small ribosomal subunit protein uS17 from Thioalkalivibrio sulfidiphilus (strain HL-EbGR7).